The primary structure comprises 209 residues: Large ribosomal subunit protein uL3 (209 aa).

Position 150 is an N5-methylglutamine (glutamine 150).

Belongs to the universal ribosomal protein uL3 family. In terms of assembly, part of the 50S ribosomal subunit. Forms a cluster with proteins L14 and L19. Post-translationally, methylated by PrmB.

In terms of biological role, one of the primary rRNA binding proteins, it binds directly near the 3'-end of the 23S rRNA, where it nucleates assembly of the 50S subunit. The polypeptide is Large ribosomal subunit protein uL3 (Salmonella arizonae (strain ATCC BAA-731 / CDC346-86 / RSK2980)).